The primary structure comprises 25 residues: Nicotinic acetylcholine receptor-binding protein Mnn-4 (25 aa).

Cys-3 and Cys-20 form a disulfide bridge.

It belongs to the three-finger toxin family. Short-chain subfamily. In terms of tissue distribution, expressed by the venom gland.

It is found in the secreted. Functionally, binds and may inhibit nicotinic acetylcholine receptors (nAChR). In Micrurus nigrocinctus (Central American coral snake), this protein is Nicotinic acetylcholine receptor-binding protein Mnn-4.